Reading from the N-terminus, the 269-residue chain is 5'-nucleotidase SurE (269 aa).

D11, D12, S43, and N101 together coordinate a divalent metal cation.

This sequence belongs to the SurE nucleotidase family. Requires a divalent metal cation as cofactor.

It is found in the cytoplasm. It carries out the reaction a ribonucleoside 5'-phosphate + H2O = a ribonucleoside + phosphate. Nucleotidase that shows phosphatase activity on nucleoside 5'-monophosphates. This chain is 5'-nucleotidase SurE, found in Prochlorococcus marinus (strain MIT 9303).